Consider the following 211-residue polypeptide: MNSILLVFAGILAVCLPASATQCNVNPVQIPKDWITMHRSCRNSMRQQIQMEVGASLQYLAMGAHFSKDVVNRPGFAQLFFDAASEEREHAMKLIEYLLMRGELTNDVSSLLQVRPPTRSSWKGGVEALEHALSMESDVTKSIRNVIKACEDDSEFNDYHLVDYLTGDFLEEQYKGQRDLAGKASTLKKLMDRHEALGEFIFDKKLLGIDV.

A signal peptide spans 1 to 20; it reads MNSILLVFAGILAVCLPASA. In terms of domain architecture, Ferritin-like diiron spans 35–191; the sequence is ITMHRSCRNS…GKASTLKKLM (157 aa). Cys-41 and Cys-150 form a disulfide bridge. The Fe cation site is built by Glu-52, Glu-87, His-90, Glu-136, and Gln-173.

This sequence belongs to the ferritin family. In terms of assembly, oligomer of 12 light (L) chains and 12 heavy (H) chains; L and H chains are disulfide-linked. The functional molecule forms a roughly spherical shell with a diameter of 12 nm and contains a central cavity into which the insoluble ferric iron core is deposited.

The protein resides in the golgi apparatus. The protein localises to the secreted. It catalyses the reaction 4 Fe(2+) + O2 + 4 H(+) = 4 Fe(3+) + 2 H2O. Functionally, stores iron in a soluble, non-toxic, readily available form. Important for iron homeostasis. Iron is taken up in the ferrous form and deposited as ferric hydroxides after oxidation. Ferritin is composed of a heavy (H) chain which is responsible for the oxidation and uptake of ferrous iron, and a light (L) chain which facilitates the nucleation of the ferrihydrite iron core. This is Ferritin heavy chain from Trichoplusia ni (Cabbage looper).